The following is a 140-amino-acid chain: Small ribosomal subunit protein uS12 (140 aa).

The segment at 33-55 (KEQTNVSSPQKRGVCTRVGTMTP) is disordered. The residue at position 102 (aspartate 102) is a 3-methylthioaspartic acid.

The protein belongs to the universal ribosomal protein uS12 family. Part of the 30S ribosomal subunit. Contacts proteins S8 and S17. May interact with IF1 in the 30S initiation complex.

Functionally, with S4 and S5 plays an important role in translational accuracy. In terms of biological role, interacts with and stabilizes bases of the 16S rRNA that are involved in tRNA selection in the A site and with the mRNA backbone. Located at the interface of the 30S and 50S subunits, it traverses the body of the 30S subunit contacting proteins on the other side and probably holding the rRNA structure together. The combined cluster of proteins S8, S12 and S17 appears to hold together the shoulder and platform of the 30S subunit. The polypeptide is Small ribosomal subunit protein uS12 (Geobacillus thermodenitrificans (strain NG80-2)).